Here is a 666-residue protein sequence, read N- to C-terminus: Endogenous retrovirus group K member 7 Gag polyprotein (666 aa).

Glycine 2 carries the N-myristoyl glycine lipid modification. Disordered stretches follow at residues 165–205 (GKGP…NKTQ) and 217–264 (ELQY…GSEL). Residues 232–247 (GMPPAPQGRAPYPQPP) show a composition bias toward pro residues. CCHC-type zinc fingers lie at residues 544–561 (GKCY…NCPV) and 580–597 (DLCP…QCRS). Positions 598 to 641 (KFDKNGQPLSGNEQRGQPQAPQQTGAFPIQPFVPQGFQEQQPPL) are disordered. Over residues 604 to 622 (QPLSGNEQRGQPQAPQQTG) the composition is skewed to polar residues.

The protein belongs to the beta type-B retroviral Gag protein family. HERV class-II K(HML-2) gag subfamily. In terms of processing, specific enzymatic cleavages may yield mature proteins. Post-translationally, myristoylation is essential for retroviral assembly. Alteration of the glycine residue leads to a block in the budding of particles and an accumulation of Gag inside the cell.

Its subcellular location is the cell membrane. Functionally, the products of the Gag polyproteins of infectious retroviruses perform highly complex orchestrated tasks during the assembly, budding, maturation, and infection stages of the viral replication cycle. During viral assembly, the proteins form membrane associations and self-associations that ultimately result in budding of an immature virion from the infected cell. Gag precursors also function during viral assembly to selectively bind and package two plus strands of genomic RNA. Endogenous Gag proteins may have kept, lost or modified their original function during evolution. The chain is Endogenous retrovirus group K member 7 Gag polyprotein (ERVK-7) from Homo sapiens (Human).